The following is a 460-amino-acid chain: Acetyl-coenzyme A carboxylase carboxyl transferase subunit beta, chloroplastic (460 aa).

One can recognise a CoA carboxyltransferase N-terminal domain in the interval 179-460; the sequence is LWVQCESCYG…GFFPLTQNGN (282 aa). Zn(2+) contacts are provided by cysteine 183, cysteine 186, cysteine 202, and cysteine 205. The C4-type zinc finger occupies 183 to 205; that stretch reads CESCYGLNYKKFFKSKMNICEHC.

This sequence belongs to the AccD/PCCB family. As to quaternary structure, acetyl-CoA carboxylase is a heterohexamer composed of biotin carboxyl carrier protein, biotin carboxylase and 2 subunits each of ACCase subunit alpha and ACCase plastid-coded subunit beta (accD). Zn(2+) is required as a cofactor.

Its subcellular location is the plastid. The protein resides in the chloroplast stroma. The catalysed reaction is N(6)-carboxybiotinyl-L-lysyl-[protein] + acetyl-CoA = N(6)-biotinyl-L-lysyl-[protein] + malonyl-CoA. It functions in the pathway lipid metabolism; malonyl-CoA biosynthesis; malonyl-CoA from acetyl-CoA: step 1/1. Its function is as follows. Component of the acetyl coenzyme A carboxylase (ACC) complex. Biotin carboxylase (BC) catalyzes the carboxylation of biotin on its carrier protein (BCCP) and then the CO(2) group is transferred by the transcarboxylase to acetyl-CoA to form malonyl-CoA. This is Acetyl-coenzyme A carboxylase carboxyl transferase subunit beta, chloroplastic from Cicer arietinum (Chickpea).